A 137-amino-acid polypeptide reads, in one-letter code: Large ribosomal subunit protein uL16 (137 aa).

This sequence belongs to the universal ribosomal protein uL16 family. In terms of assembly, part of the 50S ribosomal subunit.

Functionally, binds 23S rRNA and is also seen to make contacts with the A and possibly P site tRNAs. This Streptococcus thermophilus (strain ATCC BAA-491 / LMD-9) protein is Large ribosomal subunit protein uL16.